Reading from the N-terminus, the 224-residue chain is GTP cyclohydrolase 1 (224 aa).

Residues methionine 1–arginine 20 are disordered. Residues cysteine 114, histidine 117, and cysteine 185 each coordinate Zn(2+).

The protein belongs to the GTP cyclohydrolase I family. As to quaternary structure, toroid-shaped homodecamer, composed of two pentamers of five dimers.

It carries out the reaction GTP + H2O = 7,8-dihydroneopterin 3'-triphosphate + formate + H(+). Its pathway is cofactor biosynthesis; 7,8-dihydroneopterin triphosphate biosynthesis; 7,8-dihydroneopterin triphosphate from GTP: step 1/1. This Chlorobaculum tepidum (strain ATCC 49652 / DSM 12025 / NBRC 103806 / TLS) (Chlorobium tepidum) protein is GTP cyclohydrolase 1.